Here is a 143-residue protein sequence, read N- to C-terminus: Fluoride-specific ion channel FluC (143 aa).

The next 4 membrane-spanning stretches (helical) occupy residues 3–23 (AVVW…GSGL), 41–61 (WGTL…LIWL), 76–96 (IVGL…CLVF), and 103–123 (LMVG…VFLG). Residues glycine 81 and threonine 84 each contribute to the Na(+) site.

Belongs to the fluoride channel Fluc/FEX (TC 1.A.43) family.

The protein localises to the cell inner membrane. The enzyme catalyses fluoride(in) = fluoride(out). Na(+) is not transported, but it plays an essential structural role and its presence is essential for fluoride channel function. Its function is as follows. Fluoride-specific ion channel. Important for reducing fluoride concentration in the cell, thus reducing its toxicity. The protein is Fluoride-specific ion channel FluC of Xylella fastidiosa (strain 9a5c).